The sequence spans 187 residues: ATP synthase subunit delta (187 aa).

The protein belongs to the ATPase delta chain family. As to quaternary structure, F-type ATPases have 2 components, F(1) - the catalytic core - and F(0) - the membrane proton channel. F(1) has five subunits: alpha(3), beta(3), gamma(1), delta(1), epsilon(1). F(0) has three main subunits: a(1), b(2) and c(10-14). The alpha and beta chains form an alternating ring which encloses part of the gamma chain. F(1) is attached to F(0) by a central stalk formed by the gamma and epsilon chains, while a peripheral stalk is formed by the delta and b chains.

It localises to the cell membrane. F(1)F(0) ATP synthase produces ATP from ADP in the presence of a proton or sodium gradient. F-type ATPases consist of two structural domains, F(1) containing the extramembraneous catalytic core and F(0) containing the membrane proton channel, linked together by a central stalk and a peripheral stalk. During catalysis, ATP synthesis in the catalytic domain of F(1) is coupled via a rotary mechanism of the central stalk subunits to proton translocation. In terms of biological role, this protein is part of the stalk that links CF(0) to CF(1). It either transmits conformational changes from CF(0) to CF(1) or is implicated in proton conduction. The chain is ATP synthase subunit delta from Mesomycoplasma hyopneumoniae (strain 232) (Mycoplasma hyopneumoniae).